A 189-amino-acid polypeptide reads, in one-letter code: MKVITLTGYKAHELGIFSHNHRGITYIKKAFEQQILALIEEGVEWFLISGQLGVELWAAEVVIKLKQTHPHIQLAVLTPFLEQESQWQEASRKKYHDILEAADFVDSITKRPYEGPAQLRLKNEYLVQKSDGLLVLYDEDKPGSPSYYLEVAKKRQQQEPYDIRLITPHDLEWIAQEDEMNDSVDIDNL.

The protein belongs to the UPF0398 family.

This Halalkalibacterium halodurans (strain ATCC BAA-125 / DSM 18197 / FERM 7344 / JCM 9153 / C-125) (Bacillus halodurans) protein is UPF0398 protein BH1768.